The sequence spans 139 residues: Large-conductance mechanosensitive channel (139 aa).

The next 2 helical transmembrane spans lie at 9–29 (AFAVKGNVVDMAVGIIIGAAF) and 79–99 (IQTVIDFVIVAFAIFMGVKAI).

The protein belongs to the MscL family. As to quaternary structure, homopentamer.

The protein resides in the cell inner membrane. Channel that opens in response to stretch forces in the membrane lipid bilayer. May participate in the regulation of osmotic pressure changes within the cell. The polypeptide is Large-conductance mechanosensitive channel (Pseudomonas putida (strain GB-1)).